Here is a 166-residue protein sequence, read N- to C-terminus: PR-toxin biosynthesis cluster protein 10 (166 aa).

Functionally, part of the gene cluster that mediates the biosynthesis of PR-toxin, a bicyclic sesquiterpene belonging to the eremophilane class and acting as a mycotoxin. The first step of the pathway is catalyzed by the aristolochene synthase which performs the cyclization of trans,trans-farnesyl diphosphate (FPP) to the bicyclic sesquiterpene aristolochene. Following the formation of aristolochene, the non-oxygenated aristolochene is converted to the trioxygenated intermediate eremofortin B, via 7-epi-neopetasone. This conversion appears to involve three enzymes, a hydroxysterol oxidase-like enzyme, the quinone-oxidase prx3 that forms the quinone-type-structure in the bicyclic nucleus of aristolochene with the C8-oxo group and the C-3 hydroxyl group, and the P450 monooxygenase prx9 that introduces the epoxide at the double bond between carbons 1 and 2. No monoxy or dioxy-intermediates have been reported to be released to the broth, so these three early oxidative reactions may be coupled together. Eremofortin B is further oxidized by another P450 monooxygenase, that introduces a second epoxide between carbons 7 and 11 prior to acetylation to eremofortin A by the acetyltransferase prx11. The second epoxidation may be performed by a second P450 monooxygenase. After the acetylation step, eremofortin A is converted to eremofortin C and then to PR-toxin. First the conversion of eremofortin A to eremofortin C proceeds by oxidation of the side chain of the molecule at C-12 and is catalyzed by the short-chain oxidoreductase prx1. The cytochrome P450 monooxygenase prx8 also plays a role in this step. The primary alcohol formed at C-12 is finally oxidized by the short-chain alcohol dehydrogenase prx4 that forms PR-toxin. The protein is PR-toxin biosynthesis cluster protein 10 of Penicillium rubens (strain ATCC 28089 / DSM 1075 / NRRL 1951 / Wisconsin 54-1255) (Penicillium chrysogenum).